A 446-amino-acid chain; its full sequence is MRYLPLNSEDRSEMLARIGVDSIDALFSSIPEASRLSRDLDLPLRRSEMETQRLLSGMAARNTPASSAPFFIGAGAYKHHIPASVDHLIQRSEFLTSYTPYQPEISQGTLQAIFEFQTQVAALTAMDVANASMYDGSTATMEAVLMAHRVTKRRKAVLSGGLHPHYADVVRTVSKMTDNDALSLPPDVFAAEDLAAEIDEETSCVVVQTPDAFGNLRDLSPLAAACKEHGALLIAVFTEAVSLGLVKPPGAMGADIVVGEGQSIGNGLNFGGPYVGLFATRQKYLRQMPGRLCGETVDADGRRGFVLTLSTREQHIKRDKATSSICTNAGLCCLAFTMHLTLLGEAGLRQLARVNHANAVDLAGRFAQIYGVEVLNRSFFNEFTLRVPGPAAEIVEHLAQKGILGGVPASRLWPGEDLDDLMIVASSEINTDEDRAAFASALRGIA.

It belongs to the GcvP family. N-terminal subunit subfamily. The glycine cleavage system is composed of four proteins: P, T, L and H. In this organism, the P 'protein' is a heterodimer of two subunits.

It carries out the reaction N(6)-[(R)-lipoyl]-L-lysyl-[glycine-cleavage complex H protein] + glycine + H(+) = N(6)-[(R)-S(8)-aminomethyldihydrolipoyl]-L-lysyl-[glycine-cleavage complex H protein] + CO2. Functionally, the glycine cleavage system catalyzes the degradation of glycine. The P protein binds the alpha-amino group of glycine through its pyridoxal phosphate cofactor; CO(2) is released and the remaining methylamine moiety is then transferred to the lipoamide cofactor of the H protein. The polypeptide is Probable glycine dehydrogenase (decarboxylating) subunit 1 (Methylocella silvestris (strain DSM 15510 / CIP 108128 / LMG 27833 / NCIMB 13906 / BL2)).